Consider the following 313-residue polypeptide: tRNA dimethylallyltransferase (313 aa).

10 to 17 (GPTASGKT) provides a ligand contact to ATP. 12–17 (TASGKT) provides a ligand contact to substrate. Interaction with substrate tRNA stretches follow at residues 35–38 (DSAM), 159–163 (QRIQR), and 240–245 (RCVGYR).

Belongs to the IPP transferase family. Monomer. Requires Mg(2+) as cofactor.

It catalyses the reaction adenosine(37) in tRNA + dimethylallyl diphosphate = N(6)-dimethylallyladenosine(37) in tRNA + diphosphate. Its function is as follows. Catalyzes the transfer of a dimethylallyl group onto the adenine at position 37 in tRNAs that read codons beginning with uridine, leading to the formation of N6-(dimethylallyl)adenosine (i(6)A). This Legionella pneumophila (strain Corby) protein is tRNA dimethylallyltransferase.